A 288-amino-acid chain; its full sequence is MPELPEVETVRRGLAPVMVGASFTTVEQRRADLRFPFPDNFAARLEGRRVEALGRRAKYLLADLDDAQVLVMHLGMSGSFRIEKAGDLASPPPGKNAAHDHVVFGLSTGTRIIYNDPRRFGFMHLIARQDLAGHPLFRNVGIEPLGNELEGALLARLFAGKTTPLKTALLDQTLIAGLGNIYVCEALHRAGLSPRRAAGTLAGKKGQPTERAHRLSEIIRAVLEEAIEAGGSSLRDHRQADGALGYFQHRFRVYDREAEPCPREGCGGTIKRIVQAGRSTFFCAKCQR.

The active-site Schiff-base intermediate with DNA is Pro2. The Proton donor role is filled by Glu3. The active-site Proton donor; for beta-elimination activity is Lys58. Positions 99, 118, and 161 each coordinate DNA. The FPG-type zinc-finger motif lies at 252–288 (RVYDREAEPCPREGCGGTIKRIVQAGRSTFFCAKCQR). The Proton donor; for delta-elimination activity role is filled by Arg278.

It belongs to the FPG family. Monomer. Requires Zn(2+) as cofactor.

It catalyses the reaction Hydrolysis of DNA containing ring-opened 7-methylguanine residues, releasing 2,6-diamino-4-hydroxy-5-(N-methyl)formamidopyrimidine.. It carries out the reaction 2'-deoxyribonucleotide-(2'-deoxyribose 5'-phosphate)-2'-deoxyribonucleotide-DNA = a 3'-end 2'-deoxyribonucleotide-(2,3-dehydro-2,3-deoxyribose 5'-phosphate)-DNA + a 5'-end 5'-phospho-2'-deoxyribonucleoside-DNA + H(+). Involved in base excision repair of DNA damaged by oxidation or by mutagenic agents. Acts as a DNA glycosylase that recognizes and removes damaged bases. Has a preference for oxidized purines, such as 7,8-dihydro-8-oxoguanine (8-oxoG). Has AP (apurinic/apyrimidinic) lyase activity and introduces nicks in the DNA strand. Cleaves the DNA backbone by beta-delta elimination to generate a single-strand break at the site of the removed base with both 3'- and 5'-phosphates. The protein is Formamidopyrimidine-DNA glycosylase of Beijerinckia indica subsp. indica (strain ATCC 9039 / DSM 1715 / NCIMB 8712).